Consider the following 620-residue polypeptide: Glutathione-regulated potassium-efflux system protein KefC (620 aa).

The next 12 helical transmembrane spans lie at 4-24, 26-46, 54-74, 90-110, 114-134, 149-169, 178-198, 218-238, 270-290, 294-314, 327-347, and 359-379; these read HTLL…PIAV, LGLG…PWGL, SILH…GLEL, GALQ…FLGL, VAEL…MQAM, FAVL…IPLL, LGAF…VVLL, VFSA…EEVG, GLLL…GTLV, LRIL…LWLV, WFAV…GAAQ, and ALTL…MLLT. Residues 399-518 enclose the RCK N-terminal domain; the sequence is QPRVIVAGFG…AGVAMPERET (120 aa). A disordered region spans residues 599-620; the sequence is QGTAEGKHSGEAADEPEVKPSI.

Belongs to the monovalent cation:proton antiporter 2 (CPA2) transporter (TC 2.A.37) family. KefC subfamily. Homodimer. Interacts with the regulatory subunit KefF.

The protein localises to the cell inner membrane. Pore-forming subunit of a potassium efflux system that confers protection against electrophiles. Catalyzes K(+)/H(+) antiport. The polypeptide is Glutathione-regulated potassium-efflux system protein KefC (Salmonella heidelberg (strain SL476)).